Consider the following 665-residue polypeptide: mRNA cleavage and polyadenylation factor CLP1 (665 aa).

ATP-binding positions include K91 and 195-200; that span reads SAGKTS. Disordered stretches follow at residues 218–283 and 593–615; these read VKEG…SQAK and PPPR…HDYE. Composition is skewed to basic and acidic residues over residues 219–238 and 598–614; these read KEGD…EIHP and QSKD…HHDY.

The protein belongs to the Clp1 family. Clp1 subfamily. In terms of assembly, component of a pre-mRNA cleavage factor complex. Interacts directly with PCF11.

Its subcellular location is the nucleus. Required for endonucleolytic cleavage during polyadenylation-dependent pre-mRNA 3'-end formation. The polypeptide is mRNA cleavage and polyadenylation factor CLP1 (Malassezia globosa (strain ATCC MYA-4612 / CBS 7966) (Dandruff-associated fungus)).